A 502-amino-acid polypeptide reads, in one-letter code: MNKSLVAVGVIVALGVVWTGGAWYTGKKIETHLEDMVAQANAQLKLTAPESNLEVSYQNYHRGVFSSQLQLLVKPIAGKENPWIKSGQSVIFNESVDHGPFPLAQLKKLNLIPSMASIQTTLVNNEVSKPLFDMAKGETPFEINSRIGYSGDSSSDISLKPLNYEQKDEKVAFSGGEFQLNADRDGKAISLSGEAQSGRIDAVNEYNQKVQLTFNNLKTDGSSTLASFGERVGNQKLSLEKMTISVEGKELALLEGMEISGKSDLVNDGKTINSQLDYSLNSLKVQNQDLGSGKLTLKVGQIDGEAWHQFSQQYNAQTQALLAQPEIANNPELYQEKVTEAFFSALPLMLKGDPVITIAPLSWKNSQGESALNLSLFLKDPATTKEAPQTLAQEVDRSVKSLDAKLTIPVDMATEFMTQVAKLEGYQEDQAKKLAKQQVEGASAMGQMFRLTTLQDNTITTSLQYANGQITLNGQKMSLEDFVGMFAMPALNVPAVPAIPQQ.

The first 19 residues, 1-19, serve as a signal peptide directing secretion; it reads MNKSLVAVGVIVALGVVWT.

The protein to E.coli YihF and H.influenzae HI_1236. In terms of assembly, homodimer.

It is found in the cell inner membrane. This chain is Protein YdgA (ydgA), found in Escherichia coli (strain K12).